The chain runs to 207 residues: Large ribosomal subunit protein uL4 (207 aa).

The interval His-49–Ala-75 is disordered.

This sequence belongs to the universal ribosomal protein uL4 family. Part of the 50S ribosomal subunit.

In terms of biological role, one of the primary rRNA binding proteins, this protein initially binds near the 5'-end of the 23S rRNA. It is important during the early stages of 50S assembly. It makes multiple contacts with different domains of the 23S rRNA in the assembled 50S subunit and ribosome. Its function is as follows. Forms part of the polypeptide exit tunnel. This chain is Large ribosomal subunit protein uL4, found in Leuconostoc mesenteroides subsp. mesenteroides (strain ATCC 8293 / DSM 20343 / BCRC 11652 / CCM 1803 / JCM 6124 / NCDO 523 / NBRC 100496 / NCIMB 8023 / NCTC 12954 / NRRL B-1118 / 37Y).